The primary structure comprises 356 residues: DNA polymerase IV (356 aa).

A UmuC domain is found at 7–188 (IIHIDMDAFY…IPVTKFYGVG (182 aa)). Asp-11 and Asp-106 together coordinate Mg(2+). Glu-107 is an active-site residue.

This sequence belongs to the DNA polymerase type-Y family. As to quaternary structure, monomer. It depends on Mg(2+) as a cofactor.

It is found in the cytoplasm. The catalysed reaction is DNA(n) + a 2'-deoxyribonucleoside 5'-triphosphate = DNA(n+1) + diphosphate. Its function is as follows. Poorly processive, error-prone DNA polymerase involved in untargeted mutagenesis. Copies undamaged DNA at stalled replication forks, which arise in vivo from mismatched or misaligned primer ends. These misaligned primers can be extended by PolIV. Exhibits no 3'-5' exonuclease (proofreading) activity. May be involved in translesional synthesis, in conjunction with the beta clamp from PolIII. The protein is DNA polymerase IV of Listeria welshimeri serovar 6b (strain ATCC 35897 / DSM 20650 / CCUG 15529 / CIP 8149 / NCTC 11857 / SLCC 5334 / V8).